Here is a 421-residue protein sequence, read N- to C-terminus: Acyl-coenzyme A thioesterase 6 (421 aa).

Residues S232, D326, and H360 each act as charge relay system in the active site. The short motif at 419–421 is the Peroxisome targeting signal element; it reads SKI.

This sequence belongs to the C/M/P thioester hydrolase family.

The protein resides in the peroxisome. Its subcellular location is the cytoplasm. It carries out the reaction pristanoyl-CoA + H2O = 2,6,10,14-tetramethylpentadecanoate + CoA + H(+). The enzyme catalyses phytanoyl-CoA + H2O = 3,7,11,15-tetramethylhexadecanoate + CoA + H(+). Its pathway is lipid metabolism; fatty acid metabolism. Functionally, catalyzes the hydrolysis of acyl-CoAs into free fatty acids and coenzyme A (CoASH), regulating their respective intracellular levels. Catalyzes the hydrolysis of phytanoyl-CoA and pristanoyl-CoA, two methyl-branched fatty acids derived from phytol, that enter the body via the diet. The chain is Acyl-coenzyme A thioesterase 6 from Homo sapiens (Human).